The chain runs to 1334 residues: WASH complex subunit 2 (1334 aa).

The sufficient for interaction with WASHC3, WASHC4 and WASHC5; required for interaction with WASHC1 stretch occupies residues M1–D219. S157, S159, S204, S205, and S209 each carry phosphoserine. Residues G201 to D213 are compositionally biased toward low complexity. The interval G201–K471 is disordered. Acidic residues-rich tracts occupy residues D219–D232 and S249–E274. At S284 the chain carries Phosphoserine. Residues L289–A324 are compositionally biased toward basic and acidic residues. T322 is subject to Phosphothreonine. Residues S347 to Q594 form a sufficient for interaction with CCDC93 region. The segment at R348–Q1334 is interaction with VPS35. An LFa 1 motif is present at residues L358–F368. Position 388 is a phosphoserine (S388). 2 consecutive short sequence motifs (LFa) follow at residues L441–F457 and I476–F485. Positions F442–N454 are enriched in acidic residues. The segment at L492–A650 is disordered. Over residues L513–G530 the composition is skewed to polar residues. 2 consecutive short sequence motifs (LFa) follow at residues L531 to F542 and L566 to F577. Phosphoserine occurs at positions 533 and 538. Low complexity predominate over residues L541–P561. Polar residues-rich tracts occupy residues K584–Q594 and E601–L611. A phosphoserine mark is found at S613 and S614. Positions S625–L639 are enriched in basic and acidic residues. 2 consecutive short sequence motifs (LFa) follow at residues L658–F670 and L686–F698. The interval A691–Q837 is disordered. A phosphoserine mark is found at S723, S747, S752, S783, and S798. A compositionally biased stretch (acidic residues) spans F800–S811. Basic and acidic residues predominate over residues D818–P830. Short sequence motifs (LFa) lie at residues V835 to F843 and D852 to F858. Disordered regions lie at residues K862 to R948 and A1014 to H1225. Residues S870 and S873 each carry the phosphoserine modification. The short motif at L874–F884 is the LFa 10 element. A compositionally biased stretch (basic and acidic residues) spans P894 to V906. The span at L908 to G919 shows a compositional bias: polar residues. Residues Q932–Q1334 are interaction with phospholipids. Over residues N1023–R1041 the composition is skewed to basic residues. A required for interaction with F-actin-capping protein subunit alpha (CAPZA1 or CAPZA2 or CAPZA3) region spans residues K1024 to R1042. Residues S1049, S1067, S1084, and S1109 each carry the phosphoserine modification. 3 consecutive short sequence motifs (LFa) follow at residues L1124–F1131, A1164–F1178, and L1194–F1202. Residues S1169, S1172, and S1173 each carry the phosphoserine modification. Residues A1203–H1225 show a composition bias toward basic and acidic residues. Short sequence motifs (LFa) lie at residues I1227–F1233, L1255–F1263, and M1283–F1292. A disordered region spans residues S1294–Q1334. Residues Q1297–A1311 show a composition bias toward low complexity. An LFa 17 motif is present at residues I1323–F1331. Residue S1333 is modified to Phosphoserine.

The protein belongs to the FAM21 family. As to quaternary structure, component of the WASH core complex also described as WASH regulatory complex (SHRC) composed of WASHC1, WASHC2, WASHC3, WASHC4 and WASHC5; in the complex interacts (via N-terminus) directly with WASHC1. The WASH core complex associates with the F-actin-capping protein dimer (formed by CAPZA1, CAPZA2 or CAPZA3 and CAPZB) in a transient or substoichiometric manner which was initially described as WASH complex. Interacts with VPS35; mediates the association with the retromer CSC complex. Interacts with FKBP15. Interacts with CCDC93, CCDC22, VPS35L; indicative for an association of the WASH core complex with the CCC and retriever complexes. Directly interacts with TBC1D23.

The protein localises to the early endosome membrane. Its subcellular location is the cell membrane. Its function is as follows. Acts as a component of the WASH core complex that functions as a nucleation-promoting factor (NPF) at the surface of endosomes, where it recruits and activates the Arp2/3 complex to induce actin polymerization, playing a key role in the fission of tubules that serve as transport intermediates during endosome sorting. Mediates the recruitment of the WASH core complex to endosome membranes via binding to phospholipids and VPS35 of the retromer CSC. Mediates the recruitment of the F-actin-capping protein dimer to the WASH core complex probably promoting localized F-actin polymerization needed for vesicle scission. Via its C-terminus binds various phospholipids, most strongly phosphatidylinositol 4-phosphate (PtdIns-(4)P), phosphatidylinositol 5-phosphate (PtdIns-(5)P) and phosphatidylinositol 3,5-bisphosphate (PtdIns-(3,5)P2). Involved in the endosome-to-plasma membrane trafficking and recycling of SNX27-retromer-dependent cargo proteins, such as GLUT1. Required for the association of DNAJC13, ENTR1, ANKRD50 with retromer CSC subunit VPS35. Required for the endosomal recruitment of CCC and retriever complexes subunits COMMD1 and CCDC93 as well as the retrievere complex subunit VPS35L. This Mus musculus (Mouse) protein is WASH complex subunit 2.